The primary structure comprises 131 residues: uncharacterized protein (131 aa).

A coiled-coil region spans residues 4–44; the sequence is QKPEQDVNKKIEELEKKVQELQEQLEKTKQAVKTVASILDN.

This is an uncharacterized protein from Sulfolobus islandicus filamentous virus (isolate Iceland/Hveragerdi) (SIFV).